We begin with the raw amino-acid sequence, 645 residues long: Crossover junction endonuclease mus-81 (645 aa).

Disordered regions lie at residues 98 to 119 (LAAAGAVQDEQPPPPKRARTAR) and 219 to 310 (GVAG…EDRK). The span at 223–252 (SANTSRNAIASGSGTSNPNRSENVNPNRQD) shows a compositional bias: polar residues. Acidic residues predominate over residues 296–305 (DSDDEDPKYD). Positions 353–459 (ELVLDTREVQ…NVVYIIENYN (107 aa)) constitute an ERCC4 domain.

It belongs to the XPF family. In terms of assembly, interacts with eme-1. It depends on Mg(2+) as a cofactor.

It localises to the nucleus. Interacts with eme-1 to form a DNA structure-specific endonuclease with substrate preference for branched DNA structures with a 5'-end at the branch nick. Typical substrates include 3'-flap structures, D-loops, replication forks and nicked Holliday junctions. May be required in mitosis for the processing of stalled or collapsed replication fork intermediates. May be required in meiosis for the repair of meiosis-specific double strand breaks subsequent to single-end invasion (SEI). The polypeptide is Crossover junction endonuclease mus-81 (mus-81) (Neurospora crassa (strain ATCC 24698 / 74-OR23-1A / CBS 708.71 / DSM 1257 / FGSC 987)).